Consider the following 190-residue polypeptide: Ribosome maturation factor RimM (190 aa).

A PRC barrel domain is found at 114–190 (DDEYYWVDLI…CITVDWQPDY (77 aa)).

This sequence belongs to the RimM family. As to quaternary structure, binds ribosomal protein uS19.

The protein localises to the cytoplasm. In terms of biological role, an accessory protein needed during the final step in the assembly of 30S ribosomal subunit, possibly for assembly of the head region. Essential for efficient processing of 16S rRNA. May be needed both before and after RbfA during the maturation of 16S rRNA. It has affinity for free ribosomal 30S subunits but not for 70S ribosomes. The polypeptide is Ribosome maturation factor RimM (Acidovorax sp. (strain JS42)).